The sequence spans 557 residues: Aspartate--tRNA ligase, cytoplasmic (557 aa).

Over residues Met1–Glu12 the composition is skewed to basic and acidic residues. Residues Met1 to Asn74 form a disordered region. Ser2 carries the N-acetylserine modification. Ser14 bears the Phosphoserine mark. Positions Leu37–Asn74 are enriched in basic and acidic residues. Position 281 (Glu281) interacts with L-aspartate. Ser301 bears the Phosphoserine mark. Positions Gln303 to Lys306 are aspartate. Position 325 (Arg325) interacts with L-aspartate. ATP-binding positions include Arg325–Glu327, Arg333–Met335, and Glu478. Residues Ser481 and Arg485 each contribute to the L-aspartate site. Ser502 bears the Phosphoserine mark. Position 528–531 (Gly528–Arg531) interacts with ATP. Phosphoserine is present on Ser546.

Belongs to the class-II aminoacyl-tRNA synthetase family. Type 2 subfamily. In terms of assembly, homodimer.

It is found in the cytoplasm. The catalysed reaction is tRNA(Asp) + L-aspartate + ATP = L-aspartyl-tRNA(Asp) + AMP + diphosphate. The chain is Aspartate--tRNA ligase, cytoplasmic (DPS1) from Saccharomyces cerevisiae (strain ATCC 204508 / S288c) (Baker's yeast).